The sequence spans 486 residues: tRNA (uracil-5-)-methyltransferase homolog B (486 aa).

Q305, E355, and N405 together coordinate S-adenosyl-L-methionine. Catalysis depends on C433, which acts as the Nucleophile. E479 functions as the Proton acceptor in the catalytic mechanism.

It belongs to the class I-like SAM-binding methyltransferase superfamily. RNA M5U methyltransferase family.

It is found in the mitochondrion matrix. It carries out the reaction uridine(54) in tRNA + S-adenosyl-L-methionine = 5-methyluridine(54) in tRNA + S-adenosyl-L-homocysteine + H(+). The catalysed reaction is a uridine in 12S rRNA + S-adenosyl-L-methionine = a 5-methyluridine in 12S rRNA + S-adenosyl-L-homocysteine + H(+). Its function is as follows. Mitochondrial S-adenosyl-L-methionine-dependent methyltransferase that catalyzes the formation of 5-methyl-uridine in tRNAs and 12S rRNA. Catalyzes the methylation of uridine at position 54 (m5U54) in all tRNAs. Specifically methylates the uridine in position 429 of 12S rRNA (m5U429). Does not affect RNA stability or mitochondrial translation. This Pongo abelii (Sumatran orangutan) protein is tRNA (uracil-5-)-methyltransferase homolog B (TRMT2B).